A 197-amino-acid chain; its full sequence is Putative eggshell protein (197 aa).

Residues Met1 to Ala17 form the signal peptide.

The protein is Putative eggshell protein of Fasciola hepatica (Liver fluke).